The primary structure comprises 379 residues: MPNPAFSARIERMKLRRKGTSDQLRVATESISNQRYDGLEKYTLLEDVLHLSESWENRGKGDSAIRYIIGAMQPVDARYTEISFETASRIENQLSKKLAHNLDFRVQGSVPLDIHIKGFSDVDLLIIDTQMLMYDVNGGGSYSPTSRDGRDVIIELREAARDALEMAFPTALVDDNNAKSLRITGGSLQREVDVVPSIWWDTKEYQSMKREEDRGVTIIDKNTRERIYNAPFLHIKRIKDKCDQCNGGIRKSIRLLKTLKADSKDEGSDIDLSSYDIASLMFHADANNLNHSTYYELAVLVETHRLLNYLSQNYEVAMQLDVPNGTRKIFEKPESHVELLKLTEMVNSVVTEVLREITGRPTDFYANDKCDVLRKQMVY.

UTP is bound by residues Gln-107, Ser-109, Asp-123, and Lys-179. Asp-123 serves as a coordination point for Mg(2+). Mg(2+) is bound at residue Asp-193. UTP-binding residues include Asn-229, Lys-257, and Ser-274. Residues 328–330 (KIF) carry the Pyrimidine specificity motif (R/Q)xW in donor pocket motif.

Belongs to the CD-NTase family. E02 subfamily. Mg(2+) serves as cofactor.

The enzyme catalyses 2 UTP = c-di-UMP + 2 diphosphate. It carries out the reaction UTP + ATP = 3',3'-cUAMP + 2 diphosphate. The catalysed reaction is UTP + CTP = cyclic CMP-UMP + 2 diphosphate. Functionally, cyclic nucleotide synthase (second messenger synthase) of a CBASS antivirus system. CBASS (cyclic oligonucleotide-based antiphage signaling system) provides immunity against bacteriophage. The CD-NTase protein synthesizes cyclic nucleotides in response to infection; these serve as specific second messenger signals. The signals activate a diverse range of effectors, leading to bacterial cell death and thus abortive phage infection. The effector protein for this system is membrane protein Cap15. A type I-B(UU) CBASS system. Its function is as follows. Cyclic dinucleotide synthase that preferentially catalyzes the synthesis of 3',3'-cyclic UMP-UMP (c-di-UMP) and 3',3'-cyclic UMP-AMP, with minor amounts of 3',3'-cyclic UMP-CMP, which are second messengers for cell signal transduction. Protects E.coli against phage infection. When the CBASS operon (cap15-cdnE) is introduced in E.coli MG1655 it protects against phages T2, T4, T5, T6, SECPhi4, SECPhi6, SECPhi17, SECPhi18 and SECPhi27, but not against phage T7. The polypeptide is Cyclic dinucleotide synthase CdnE (Yersinia aleksiciae).